Here is a 315-residue protein sequence, read N- to C-terminus: Universal stress protein E (315 aa).

Belongs to the universal stress protein A family.

Its subcellular location is the cytoplasm. In terms of biological role, required for resistance to DNA-damaging agents. This chain is Universal stress protein E (uspE), found in Salmonella typhi.